A 73-amino-acid chain; its full sequence is Alpha-amylase inhibitor Paim-1 (73 aa).

2 disulfides stabilise this stretch: cysteine 8–cysteine 24 and cysteine 42–cysteine 70.

Its function is as follows. Inhibits mammalian alpha-amylases specifically but has no action on plant and microbial alpha-amylases. This Streptomyces olivaceoviridis (Streptomyces corchorusii) protein is Alpha-amylase inhibitor Paim-1.